A 106-amino-acid polypeptide reads, in one-letter code: MFDGLDLKNLNLGDMLNQFQDMAKNAQNENASRIFTSKAGGGMVEISINGNSEVVDLKIDDSLLEDKDSLQILLISCMNDVIKQSDENKKMMAMNLMGGLGSFGQK.

The protein belongs to the YbaB/EbfC family. In terms of assembly, homodimer.

It is found in the cytoplasm. The protein localises to the nucleoid. Binds to DNA and alters its conformation. May be involved in regulation of gene expression, nucleoid organization and DNA protection. The chain is Nucleoid-associated protein Abu_0429 from Aliarcobacter butzleri (strain RM4018) (Arcobacter butzleri).